A 103-amino-acid polypeptide reads, in one-letter code: Large ribosomal subunit protein bL21 (103 aa).

The protein belongs to the bacterial ribosomal protein bL21 family. As to quaternary structure, part of the 50S ribosomal subunit. Contacts protein L20.

This protein binds to 23S rRNA in the presence of protein L20. In Amoebophilus asiaticus (strain 5a2), this protein is Large ribosomal subunit protein bL21.